The primary structure comprises 1528 residues: Zinc finger FYVE domain-containing protein 16 (1528 aa).

A Phosphoserine modification is found at Ser-120. The segment at 629–664 is disordered; it reads TQAVGGARPKQLLSLPPGTRSSKELNKPDVVDVPES. Over residues 649–658 the composition is skewed to basic and acidic residues; the sequence is SSKELNKPDV. The FYVE-type zinc finger occupies 735–793; it reads DSEAPNCMNCQVKFTFTKRRHHCRACGKVFCGVCCNRKCKLQYLEKEARVCVICYETIN. Residues Cys-741, Cys-744, Cys-757, Cys-760, Cys-765, Cys-768, Cys-785, and Cys-788 each coordinate Zn(2+). Residues Ser-803, Ser-833, Ser-884, and Ser-927 each carry the phosphoserine modification. A disordered region spans residues 819 to 849; it reads TDQPLQETQTSSTPSPTTLPISALKQPNVEG. Positions 821-838 are enriched in low complexity; that stretch reads QPLQETQTSSTPSPTTLP. The segment at 928 to 949 is disordered; sequence PTCHTAPVERLPGNTGTEGLPM.

As to quaternary structure, interacts (via C-terminus) with TOM1 (via C-terminus); interaction is required to target TOM1 to endosomes. Does not interact with TOM1L1 or TOM1L2.

It localises to the cytoplasm. The protein localises to the early endosome membrane. In terms of biological role, may be involved in regulating membrane trafficking in the endosomal pathway. Overexpression induces endosome aggregation. Required to target TOM1 to endosomes. In Mus musculus (Mouse), this protein is Zinc finger FYVE domain-containing protein 16 (Zfyve16).